The sequence spans 354 residues: Inactive ADP-ribosyltransferase ARH2 (354 aa).

Position 27 is a phosphoserine (Ser-27).

Belongs to the ADP-ribosylglycohydrolase family.

It is found in the cytoplasm. Its subcellular location is the myofibril. The protein localises to the sarcomere. Functionally, required for myofibril assembly and outgrowth of the cardiac chambers in the developing heart. Appears to be catalytically inactive, showing no activity against O-acetyl-ADP-ribose. This is Inactive ADP-ribosyltransferase ARH2 (ADPRHL1) from Homo sapiens (Human).